Here is a 369-residue protein sequence, read N- to C-terminus: Biglycan (369 aa).

Positions 1 to 16 are cleaved as a signal peptide; it reads MWPLWPLAALLALSQA. The propeptide occupies 17–37; that stretch reads LPFEQKAFWDFTLDDGLPMLN. Residues S42 and S48 are each glycosylated (O-linked (Xyl...) (glycosaminoglycan) serine). 2 disulfide bridges follow: C64/C70 and C68/C77. LRR repeat units lie at residues 83–103, 104–127, 128–151, 152–172, 173–196, 197–221, 222–242, 243–266, 267–290, 291–313, 314–343, and 344–369; these read KAVP…NNDI, SELR…NNKI, SKIH…KNHL, VEIP…DNRI, RKVP…GNPL, ENSG…EAKL, TGIP…HNKI, QAIE…HNQI, RMIE…NNKL, SRVP…TNNI, TKVG…NNPV, and PYWE…NYKK. O-linked (Xyl...) (glycosaminoglycan) serine glycosylation is found at S181 and S199. N-linked (GlcNAc...) asparagine glycans are attached at residues N271 and N312. An intrachain disulfide couples C322 to C355.

This sequence belongs to the small leucine-rich proteoglycan (SLRP) family. SLRP class I subfamily. Homodimer. Forms a ternary complex with MFAP2 and ELN. In terms of processing, the two attached glycosaminoglycan chains can be either chondroitin sulfate or dermatan sulfate. As to expression, found in several connective tissues, especially in articular cartilages.

Its subcellular location is the secreted. It is found in the extracellular space. The protein resides in the extracellular matrix. In terms of biological role, may be involved in collagen fiber assembly. The sequence is that of Biglycan (BGN) from Bos taurus (Bovine).